We begin with the raw amino-acid sequence, 402 residues long: MLPYTLIQEADDRLRKRVRRTELIHSHHFSEKLGIPIYFKCENLQRTGAFKIRGALNFMTSQPREALAKGVITASAGNHAQGVAFSADLLGVPSTVFMPESTPPQKVFATRDYGAEVVLTGRNFDEAYAAAVQAQEERGALFVHPFDDPLVMAGQGTIGLEVLQELPDVANILVPIGGGGLIAGIATAIRETHPHVRIIGVETAAAPSAHYSLQKGKIVQVPVTVTLADGIAVKKPGVNTFPIIRDLVDEVVLVEEEEIALAIVALLERTKLLVEGAGAVPLAALLNRRVTDLSGKTVCVLSGGNIDVKTISVVVERGLVAAGRYLKLKVELDDLPGALARLATEIAEAKANISIITHDRRSKSLPIGKTEVLIELETRGFEHIQEVISHLQGVGYLVDVLK.

Residue Lys-51 is modified to N6-(pyridoxal phosphate)lysine. Residues Asn-78, 178 to 181 (GGGL), and Ser-302 each bind pyridoxal 5'-phosphate. In terms of domain architecture, ACT spans 327–402 (KLKVELDDLP…GVGYLVDVLK (76 aa)).

This sequence belongs to the serine/threonine dehydratase family. The cofactor is pyridoxal 5'-phosphate.

It carries out the reaction L-threonine = 2-oxobutanoate + NH4(+). It catalyses the reaction L-serine = pyruvate + NH4(+). It functions in the pathway amino-acid biosynthesis; L-isoleucine biosynthesis; 2-oxobutanoate from L-threonine: step 1/1. Its function is as follows. Catalyzes the conversion of threonine to 2-oxobutanoate and ammonia. Functions in the threonine-dependent pathway of isoleucine biosynthesis, which is the minor pathway for isoleucine biosynthesis in G.sulfurreducens. Also displays serine ammonia-lyase activity, yielding pyruvate from L-serine. The protein is L-threonine ammonia-lyase of Geobacter sulfurreducens (strain ATCC 51573 / DSM 12127 / PCA).